A 495-amino-acid polypeptide reads, in one-letter code: Cytochrome P450 monooxygenase 88 (495 aa).

A helical transmembrane segment spans residues 2–22; the sequence is FLQIVTSVLATGLLYALISVL. Asparagine 25 and asparagine 198 each carry an N-linked (GlcNAc...) asparagine glycan. Cysteine 428 contacts heme.

It belongs to the cytochrome P450 family. Requires heme as cofactor.

It localises to the membrane. It functions in the pathway secondary metabolite biosynthesis. Cytochrome P450 monooxygenase that is able to use 4-ethoxybenzoic acid as a substrate for oxidation. The chain is Cytochrome P450 monooxygenase 88 from Postia placenta (strain ATCC 44394 / Madison 698-R) (Brown rot fungus).